The primary structure comprises 539 residues: Diacylglycerol O-acyltransferase 1 (539 aa).

Positions Met1–Gly104 are disordered. Positions Thr33–Asn52 are enriched in polar residues. Over residues Glu56–Arg80 the composition is skewed to basic and acidic residues. 7 helical membrane passes run His143–Ile163, Trp187–Glu207, Val219–Ile239, Ser244–Val264, Tyr294–Tyr314, Val334–Ile354, and Val383–Leu403. The FYXDWWN motif motif lies at Phe410–Asn416. Transmembrane regions (helical) follow at residues Gly451–Val471, Cys473–Ile493, and Val506–Leu526. His465 is an active-site residue.

This sequence belongs to the membrane-bound acyltransferase family. Sterol o-acyltransferase subfamily.

It is found in the endoplasmic reticulum membrane. The enzyme catalyses an acyl-CoA + a 1,2-diacyl-sn-glycerol = a triacyl-sn-glycerol + CoA. It functions in the pathway glycerolipid metabolism; triacylglycerol biosynthesis. Its function is as follows. Major contributor to triacylglycerol (TAG) synthesis and oil accumulation in developing seeds. Catalyzes the acylation of the sn-3 hydroxy group of sn-1,2-diacylglycerol using acyl-CoA. Has a marked preference for oleoyl-CoA as substrate. The chain is Diacylglycerol O-acyltransferase 1 from Corylus americana (American hazelnut).